The following is a 550-amino-acid chain: Leucine-rich repeat, immunoglobulin-like domain and transmembrane domain-containing protein 2 (550 aa).

The signal sequence occupies residues 1–19; sequence MASVFHYFLLVLVFLDTHA. One can recognise an LRRNT domain in the interval 23–54; that stretch reads FCLPGCTCSEESFGRTLQCTSVSLGKIPGNLS. N-linked (GlcNAc...) asparagine glycosylation occurs at asparagine 52. LRR repeat units follow at residues 80-103, 104-125, 128-149, and 152-173; these read TLEYLWLNFNNISVIHLGALEHLP, ELRELRLEGNKLCSVPWTAFRA, LLRVLDLKRNKIDALPELALQF, and SLTYLDLSSNRLTVVSKSVFLN. The region spanning 200–252 is the LRRCT domain; that stretch reads NPWVCDCRLRGLVQFVKSITLPVILVNSYLICQGPLSKAGQLFHETELSACMK. The region spanning 253 to 341 is the Ig-like domain; that stretch reads PQISTPSANI…SIGKSNLVIS (89 aa). Cysteines 274 and 327 form a disulfide. The 91-residue stretch at 361-451 folds into the Fibronectin type-III domain; the sequence is EGNAYIDLRV…QGQCVAFVTG (91 aa). The helical transmembrane segment at 466–486 threads the bilayer; sequence VTVVLCVVLLAVPVGAYAWAA. The interval 508-550 is disordered; that stretch reads SCTPAAPQSKDGSFREHPAVCDDGEGHIDTEGDKEKGGTEDNS. Basic and acidic residues predominate over residues 519–550; it reads GSFREHPAVCDDGEGHIDTEGDKEKGGTEDNS.

As to quaternary structure, interacts with LRIT1; may form a heterodimer with LRIT1.

The protein localises to the membrane. The sequence is that of Leucine-rich repeat, immunoglobulin-like domain and transmembrane domain-containing protein 2 (LRIT2) from Homo sapiens (Human).